The chain runs to 207 residues: Thymidine kinase (207 aa).

ATP-binding positions include 15–22 and 88–91; these read GCMFSGKS and DEIQ. Catalysis depends on Glu89, which acts as the Proton acceptor. The Zn(2+) site is built by Cys145, Cys148, Cys183, and His186. Residues 184-198 are compositionally biased toward basic residues; it reads RHHHEVPGKPKKRYN. The segment at 184-207 is disordered; the sequence is RHHHEVPGKPKKRYNHPLAGHTGE.

It belongs to the thymidine kinase family. Homotetramer.

It is found in the cytoplasm. It carries out the reaction thymidine + ATP = dTMP + ADP + H(+). The protein is Thymidine kinase of Geobacillus kaustophilus (strain HTA426).